We begin with the raw amino-acid sequence, 185 residues long: uncharacterized protein (185 aa).

Positions 160 to 185 (QYTGPAVPSVPTTNLNDIGDPTKTVQ) are disordered.

This is an uncharacterized protein from Saccharomyces cerevisiae (strain ATCC 204508 / S288c) (Baker's yeast).